The sequence spans 160 residues: MTAPDDTDRRLIAATQAGLPLDEAPYARIAAELGLTETQVITRLSILHAQGVIRRIAIAPNHYALGMIANGMSVWDVDDAQAEALGERIGALDFVTHCYLRPRAPVWRYNLFAMLHGQSRAEVEQKRAQVRALLGAACRADDILYSTRILKKTGLRLKDG.

The protein belongs to the Ahb/Nir family. Forms a complex composed of NirDL, NirG and NirH. All proteins are required for the total conversion of siroheme to didecarboxysiroheme.

It carries out the reaction siroheme + 2 H(+) = 12,18-didecarboxysiroheme + 2 CO2. Its pathway is porphyrin-containing compound metabolism. Its function is as follows. Involved in heme d1 biosynthesis. Catalyzes the decarboxylation of siroheme into didecarboxysiroheme. Siroheme is probably decarboxylated to monodecarboxysiroheme, which is in turn decarboxylated to didecarboxysiroheme. This is Siroheme decarboxylase NirH subunit from Paracoccus pantotrophus (Thiosphaera pantotropha).